A 235-amino-acid polypeptide reads, in one-letter code: Aspartate/glutamate leucyltransferase (235 aa).

The protein belongs to the R-transferase family. Bpt subfamily.

The protein resides in the cytoplasm. It catalyses the reaction N-terminal L-glutamyl-[protein] + L-leucyl-tRNA(Leu) = N-terminal L-leucyl-L-glutamyl-[protein] + tRNA(Leu) + H(+). It carries out the reaction N-terminal L-aspartyl-[protein] + L-leucyl-tRNA(Leu) = N-terminal L-leucyl-L-aspartyl-[protein] + tRNA(Leu) + H(+). In terms of biological role, functions in the N-end rule pathway of protein degradation where it conjugates Leu from its aminoacyl-tRNA to the N-termini of proteins containing an N-terminal aspartate or glutamate. In Shewanella putrefaciens (strain CN-32 / ATCC BAA-453), this protein is Aspartate/glutamate leucyltransferase.